The following is an 801-amino-acid chain: Elongation factor G, mitochondrial (801 aa).

The N-terminal 62 residues, 1-62, are a transit peptide targeting the mitochondrion; it reads MRTPTLARLP…LSKHFQQRRN (62 aa). Residues 99–386 enclose the tr-type G domain; sequence SRVRNIGIAA…GVIDYLPNPS (288 aa). GTP-binding positions include 108–115, 184–188, and 238–241; these read AHIDSGKT, DTPGH, and NKMD.

Belongs to the TRAFAC class translation factor GTPase superfamily. Classic translation factor GTPase family. EF-G/EF-2 subfamily.

It is found in the mitochondrion. It participates in protein biosynthesis; polypeptide chain elongation. Functionally, mitochondrial GTPase that catalyzes the GTP-dependent ribosomal translocation step during translation elongation. During this step, the ribosome changes from the pre-translocational (PRE) to the post-translocational (POST) state as the newly formed A-site-bound peptidyl-tRNA and P-site-bound deacylated tRNA move to the P and E sites, respectively. Catalyzes the coordinated movement of the two tRNA molecules, the mRNA and conformational changes in the ribosome. In Aspergillus niger (strain ATCC MYA-4892 / CBS 513.88 / FGSC A1513), this protein is Elongation factor G, mitochondrial (mef1).